The chain runs to 229 residues: uncharacterized protein (229 aa).

The first 17 residues, 1–17, serve as a signal peptide directing secretion; sequence MKKIIALMLFLTFFAHA.

This is an uncharacterized protein from Escherichia coli O157:H7.